Consider the following 408-residue polypeptide: MIVMASSLWYLYEFARKKWIKRFIDAKSDKSSYIPPERYRKIPPIVKFPEKCISCEGCKESCPAFAIEMIYNEEYNKKLPVIDEGSCVACANCIEVCPTGVLEMDKHRVETEGLFFDKPKYSNLIIDEEVCVRCGNCERACPINVIERKEGKYVINMALCISCKECIKVCPIENAIVVVDEKTLKEKIDKAFEIKNKKITGKLEIKENVIEKIPHIVSGLCVSCGICKDVCVGEIDLNEKKVVECVKCGLCIEVCSTTAIRIYKPIIPKRKDICYVIDEDLCIGCRICQKVCGSGAIKISKETKLPYIVPELCVRGGACARECPVGAIKVVKPEEAEEAVKVRIIEDKIIESIEKDLVLYTEKYGKVKEEIEKLSLKKLKEELKRRVYEENKRIMEKKRELYDKGNNS.

4Fe-4S ferredoxin-type domains follow at residues 42–72 (IPPI…MIYN), 78–107 (KLPV…MDKH), 122–151 (SNLI…RKEG), 151–181 (GKYV…VVDE), 212–241 (KIPH…NEKK), 233–265 (GEID…IYKP), 273–302 (ICYV…ISKE), and 304–333 (KLPY…VVKP). Positions 52, 55, 58, 62, 87, 90, 93, 97, 131, 134, 137, 141, 160, 163, 166, and 170 each coordinate [4Fe-4S] cluster. 4 residues coordinate [4Fe-4S] cluster: Cys-282, Cys-285, Cys-288, and Cys-292.

This is an uncharacterized protein from Methanocaldococcus jannaschii (strain ATCC 43067 / DSM 2661 / JAL-1 / JCM 10045 / NBRC 100440) (Methanococcus jannaschii).